A 380-amino-acid polypeptide reads, in one-letter code: Glutamate 5-kinase (380 aa).

Lys20 provides a ligand contact to ATP. Substrate-binding residues include Ser59, Asp146, and Asn158. 220 to 226 (TGGMYSK) contributes to the ATP binding site. The 79-residue stretch at 285–363 (SGTVTVDEGA…HEVAAILGDA (79 aa)) folds into the PUA domain.

The protein belongs to the glutamate 5-kinase family.

The protein resides in the cytoplasm. The catalysed reaction is L-glutamate + ATP = L-glutamyl 5-phosphate + ADP. The protein operates within amino-acid biosynthesis; L-proline biosynthesis; L-glutamate 5-semialdehyde from L-glutamate: step 1/2. Catalyzes the transfer of a phosphate group to glutamate to form L-glutamate 5-phosphate. The protein is Glutamate 5-kinase of Nitratidesulfovibrio vulgaris (strain ATCC 29579 / DSM 644 / CCUG 34227 / NCIMB 8303 / VKM B-1760 / Hildenborough) (Desulfovibrio vulgaris).